Consider the following 162-residue polypeptide: Caveolin-2 (162 aa).

The Cytoplasmic portion of the chain corresponds to 1–86 (MGLETEKADV…FEMSKYVIYK (86 aa)). Tyrosine 19 is subject to Phosphotyrosine; by SRC. Phosphoserine is present on residues serine 20 and serine 23. A Phosphotyrosine; by SRC modification is found at tyrosine 27. An intramembrane region (helical) is located at residues 87–107 (FLTVFLAIPLAFAAGILFATL). At 108–162 (SCLHIWIIMPFVKTCLMVLPSVQTIWKSVTDVVIAPLCTSVGRSFSSVSLQLSHD) the chain is on the cytoplasmic side.

The protein belongs to the caveolin family. As to quaternary structure, monomer or homodimer. Interacts with CAV1; the interaction forms a stable heterooligomeric complex that is required for targeting to lipid rafts and for caveolae formation. Tyrosine phosphorylated forms do not form heterooligomers with the Tyr-19-phosphorylated form existing as a monomer or dimer, and the Tyr-27-form as a monomer only. Interacts (tyrosine phosphorylated form) with the SH2 domain-containing proteins, RASA1, NCK1 and SRC. Interacts (tyrosine phosphorylated form) with INSR, the interaction (Tyr-27-phosphorylated form) is increased on insulin stimulation. Interacts (Tyr-19 phosphorylated form) with MAPK1 (phosphorylated form); the interaction, promoted by insulin, leads to nuclear location and MAPK1 activation. Interacts with STAT3; the interaction is increased on insulin-induced tyrosine phosphorylation leading to STAT activation. Phosphorylated on serine and tyrosine residues. CAV1 promotes phosphorylation on Ser-23 which then targets the complex to the plasma membrane, lipid rafts and caveolae. Phosphorylation on both Tyr-19 and Tyr-27 is required for insulin-induced 'Ser-727' phosphorylation of STAT3 and its activation. Phosphorylation on Tyr-19 is required for insulin-induced phosphorylation of MAPK1 and DNA binding of STAT3. Tyrosine phosphorylation is induced by both EGF and insulin.

Its subcellular location is the nucleus. It is found in the cytoplasm. It localises to the golgi apparatus membrane. The protein resides in the cell membrane. The protein localises to the membrane. Its subcellular location is the caveola. May act as a scaffolding protein within caveolar membranes. Interacts directly with G-protein alpha subunits and can functionally regulate their activity. Acts as an accessory protein in conjunction with CAV1 in targeting to lipid rafts and driving caveolae formation. Positive regulator of cellular mitogenesis of the MAPK signaling pathway. Required for the insulin-stimulated nuclear translocation and activation of MAPK1 and STAT3, and the subsequent regulation of cell cycle progression. The sequence is that of Caveolin-2 (CAV2) from Muntiacus muntjak (Barking deer).